The following is an 89-amino-acid chain: Small ribosomal subunit protein uS15 (89 aa).

Belongs to the universal ribosomal protein uS15 family. As to quaternary structure, part of the 30S ribosomal subunit. Forms a bridge to the 50S subunit in the 70S ribosome, contacting the 23S rRNA.

In terms of biological role, one of the primary rRNA binding proteins, it binds directly to 16S rRNA where it helps nucleate assembly of the platform of the 30S subunit by binding and bridging several RNA helices of the 16S rRNA. Functionally, forms an intersubunit bridge (bridge B4) with the 23S rRNA of the 50S subunit in the ribosome. The chain is Small ribosomal subunit protein uS15 from Mycobacterium bovis (strain ATCC BAA-935 / AF2122/97).